A 106-amino-acid chain; its full sequence is UPF0473 protein LSEI_0788 (106 aa).

This sequence belongs to the UPF0473 family.

The sequence is that of UPF0473 protein LSEI_0788 from Lacticaseibacillus paracasei (strain ATCC 334 / BCRC 17002 / CCUG 31169 / CIP 107868 / KCTC 3260 / NRRL B-441) (Lactobacillus paracasei).